Here is a 179-residue protein sequence, read N- to C-terminus: Large ribosomal subunit protein uL5 (179 aa).

The protein belongs to the universal ribosomal protein uL5 family. In terms of assembly, part of the 50S ribosomal subunit; part of the 5S rRNA/L5/L18/L25 subcomplex. Contacts the 5S rRNA and the P site tRNA. Forms a bridge to the 30S subunit in the 70S ribosome.

In terms of biological role, this is one of the proteins that bind and probably mediate the attachment of the 5S RNA into the large ribosomal subunit, where it forms part of the central protuberance. In the 70S ribosome it contacts protein S13 of the 30S subunit (bridge B1b), connecting the 2 subunits; this bridge is implicated in subunit movement. Contacts the P site tRNA; the 5S rRNA and some of its associated proteins might help stabilize positioning of ribosome-bound tRNAs. The sequence is that of Large ribosomal subunit protein uL5 from Oceanobacillus iheyensis (strain DSM 14371 / CIP 107618 / JCM 11309 / KCTC 3954 / HTE831).